The primary structure comprises 238 residues: Probable transcriptional regulatory protein VIBHAR_07036 (238 aa).

The protein belongs to the TACO1 family.

Its subcellular location is the cytoplasm. The polypeptide is Probable transcriptional regulatory protein VIBHAR_07036 (Vibrio campbellii (strain ATCC BAA-1116)).